Reading from the N-terminus, the 488-residue chain is Stromelysin-3 (488 aa).

An N-terminal signal peptide occupies residues 1 to 31 (MAPAAWLRSAAARALLPPMLLLLLQPPPLLA). A propeptide spans 32–97 (RALPPDAHHL…GLSARNRQKR (66 aa)) (activation peptide). Residues 41–93 (LHAERRGPQPWHAALPSSPAPAPATQEAPRPASSLRPPRCGVPDPSDGLSARN) form a disordered region. The span at 50 to 79 (PWHAALPSSPAPAPATQEAPRPASSLRPPR) shows a compositional bias: low complexity. A Cysteine switch motif is present at residues 78 to 85 (PRCGVPDP). C80 and D166 together coordinate Zn(2+). D171, G172, G174, and I176 together coordinate Ca(2+). 3 residues coordinate Zn(2+): H179, H192, and H215. The active site involves E216. Residues H219 and H225 each contribute to the Zn(2+) site. 4 Hemopexin repeats span residues 291-339 (PDAC…WQGL), 340-382 (PSPV…ELGL), 384-432 (RFPV…WRGV), and 433-480 (PSEI…FFGC). An intrachain disulfide couples C294 to C480.

It belongs to the peptidase M10A family. The cofactor is Ca(2+). Zn(2+) serves as cofactor. Post-translationally, the precursor is cleaved by a furin endopeptidase. As to expression, specifically expressed in stromal cells of breast carcinomas.

It localises to the secreted. The protein localises to the extracellular space. It is found in the extracellular matrix. Functionally, may play an important role in the progression of epithelial malignancies. This chain is Stromelysin-3 (MMP11), found in Homo sapiens (Human).